We begin with the raw amino-acid sequence, 375 residues long: tRNA(Met) cytidine acetate ligase (375 aa).

ATP contacts are provided by residues 7–20 (VVEY…HRYH), Gly-101, Asn-151, and Arg-176.

Belongs to the TmcAL family.

It localises to the cytoplasm. It carries out the reaction cytidine(34) in elongator tRNA(Met) + acetate + ATP = N(4)-acetylcytidine(34) in elongator tRNA(Met) + AMP + diphosphate. Functionally, catalyzes the formation of N(4)-acetylcytidine (ac(4)C) at the wobble position of elongator tRNA(Met), using acetate and ATP as substrates. First activates an acetate ion to form acetyladenylate (Ac-AMP) and then transfers the acetyl group to tRNA to form ac(4)C34. The sequence is that of tRNA(Met) cytidine acetate ligase from Limosilactobacillus fermentum (strain NBRC 3956 / LMG 18251) (Lactobacillus fermentum).